The sequence spans 1252 residues: DNA-directed RNA polymerase subunit beta (1252 aa).

This sequence belongs to the RNA polymerase beta chain family. As to quaternary structure, the RNAP catalytic core consists of 2 alpha, 1 beta, 1 beta' and 1 omega subunit. When a sigma factor is associated with the core the holoenzyme is formed, which can initiate transcription.

It catalyses the reaction RNA(n) + a ribonucleoside 5'-triphosphate = RNA(n+1) + diphosphate. Its function is as follows. DNA-dependent RNA polymerase catalyzes the transcription of DNA into RNA using the four ribonucleoside triphosphates as substrates. The chain is DNA-directed RNA polymerase subunit beta from Chlamydia caviae (strain ATCC VR-813 / DSM 19441 / 03DC25 / GPIC) (Chlamydophila caviae).